Consider the following 121-residue polypeptide: Class I hydrophobin 2 (121 aa).

An N-terminal signal peptide occupies residues M1 to A18. 4 disulfide bridges follow: C52-C101, C60-C94, C61-C79, and C102-C116. N83 is a glycosylation site (N-linked (GlcNAc...) asparagine).

The protein belongs to the fungal hydrophobin family. Self-assembles to form functional amyloid fibrils called rodlets. Self-assembly into fibrillar rodlets occurs spontaneously at hydrophobic:hydrophilic interfaces and the rodlets further associate laterally to form amphipathic monolayers. As to expression, expressed in conidia and aerial hyphae.

The protein localises to the secreted. It is found in the cell wall. Its function is as follows. Aerial growth, conidiation, and dispersal of filamentous fungi in the environment rely upon a capability of their secreting small amphipathic proteins called hydrophobins (HPBs) with low sequence identity. Class I can self-assemble into an outermost layer of rodlet bundles on aerial cell surfaces, conferring cellular hydrophobicity that supports fungal growth, development and dispersal; whereas Class II form highly ordered films at water-air interfaces through intermolecular interactions but contribute nothing to the rodlet structure. Hcf-2 is a class I hydrophobin that is not necessary for the development of hyphae or conidia but contributes to cell surface hydrophobicity. In Passalora fulva (Tomato leaf mold), this protein is Class I hydrophobin 2.